The following is a 267-amino-acid chain: tRNA pseudouridine synthase A (267 aa).

D54 functions as the Nucleophile in the catalytic mechanism. Y112 lines the substrate pocket.

Belongs to the tRNA pseudouridine synthase TruA family. As to quaternary structure, homodimer.

The enzyme catalyses uridine(38/39/40) in tRNA = pseudouridine(38/39/40) in tRNA. Its function is as follows. Formation of pseudouridine at positions 38, 39 and 40 in the anticodon stem and loop of transfer RNAs. This chain is tRNA pseudouridine synthase A, found in Bordetella avium (strain 197N).